A 292-amino-acid chain; its full sequence is uncharacterized protein (292 aa).

This is an uncharacterized protein from Acanthamoeba polyphaga (Amoeba).